Reading from the N-terminus, the 316-residue chain is Pantothenate kinase (316 aa).

95-102 is a binding site for ATP; that stretch reads GSVAVGKS.

Belongs to the prokaryotic pantothenate kinase family.

The protein resides in the cytoplasm. It catalyses the reaction (R)-pantothenate + ATP = (R)-4'-phosphopantothenate + ADP + H(+). It participates in cofactor biosynthesis; coenzyme A biosynthesis; CoA from (R)-pantothenate: step 1/5. This chain is Pantothenate kinase, found in Shewanella sp. (strain ANA-3).